Consider the following 740-residue polypeptide: F-BAR and double SH3 domains protein 2 (740 aa).

The F-BAR domain maps to 8–282; the sequence is VKVTQELKNI…NSSKVVRDYN (275 aa). Residues 303–323 are disordered; that stretch reads PCDSDTSRQLESETGTTEEHS. Positions 307-323 are enriched in basic and acidic residues; the sequence is DTSRQLESETGTTEEHS. Positions 356–397 form a coiled coil; it reads GAAVSEQSRAELEQKIDEARENIRKAEIIKLKAEARLDLLKQ. 2 consecutive SH3 domains span residues 469–530 and 567–629; these read NYPL…FPTS and ASVC…ELSA. The required and sufficient for location at clathrin-coated pits stretch occupies residues 567–629; it reads ASVCFVKALY…PSVLVEELSA (63 aa). Residues 633 to 740 form a disordered region; the sequence is GDTPWMREIQ…KIEDVEITLV (108 aa). Residues 646–657 are compositionally biased toward pro residues; sequence SPKPHASLPPLP. 2 positions are modified to phosphoserine: Ser675 and Ser681.

As to quaternary structure, homodimer. Interacts (via SH3 domain 2) with ITSN1 (via SH3 domain 4). Recruited to clathrin-coated pits during a mid-to-late stage of assembly via interaction with ITSN1. Interacts (via SH3 domain 1) with WASL. Interacts with WAS. Interacts with CASK and MAGI1. CASK inhibits interaction with MAGI1. Phosphorylated. Phosphorylation on a Ser residue is important for recruitment to the cell membrane and for its role in promoting endocytosis. In terms of tissue distribution, liver, brain, heart, placenta, skeletal muscle, pancreas, lung and kidney.

The protein localises to the cytoplasm. It localises to the cell junction. It is found in the membrane. Its subcellular location is the clathrin-coated pit. The protein resides in the cell membrane. The protein localises to the cell projection. It localises to the stereocilium. Adapter protein that plays a role in endocytosis via clathrin-coated pits. Contributes to the internalization of cell surface receptors, such as integrin ITGB1 and transferrin receptor. Promotes endocytosis of EGFR in cancer cells, and thereby contributes to the down-regulation of EGFR signaling. Recruited to clathrin-coated pits during a mid-to-late stage of assembly, where it is required for normal progress from U-shaped intermediate stage pits to terminal, omega-shaped pits. Binds to membranes enriched in phosphatidylinositol 3,4-bisphosphate or phosphatidylinositol 3,4,5-trisphosphate. When bound to membranes, promotes actin polymerization via its interaction with WAS and/or WASL which leads to the activation of the Arp2/3 complex. Does not promote actin polymerisation in the absence of membranes. In Homo sapiens (Human), this protein is F-BAR and double SH3 domains protein 2 (FCHSD2).